The following is a 320-amino-acid chain: Acetyl-coenzyme A carboxylase carboxyl transferase subunit alpha (320 aa).

Positions 42-295 (IEEKALAALT…GDAIAKSFAD (254 aa)) constitute a CoA carboxyltransferase C-terminal domain.

This sequence belongs to the AccA family. As to quaternary structure, acetyl-CoA carboxylase is a heterohexamer composed of biotin carboxyl carrier protein (AccB), biotin carboxylase (AccC) and two subunits each of ACCase subunit alpha (AccA) and ACCase subunit beta (AccD).

It localises to the cytoplasm. It carries out the reaction N(6)-carboxybiotinyl-L-lysyl-[protein] + acetyl-CoA = N(6)-biotinyl-L-lysyl-[protein] + malonyl-CoA. It participates in lipid metabolism; malonyl-CoA biosynthesis; malonyl-CoA from acetyl-CoA: step 1/1. Its function is as follows. Component of the acetyl coenzyme A carboxylase (ACC) complex. First, biotin carboxylase catalyzes the carboxylation of biotin on its carrier protein (BCCP) and then the CO(2) group is transferred by the carboxyltransferase to acetyl-CoA to form malonyl-CoA. This chain is Acetyl-coenzyme A carboxylase carboxyl transferase subunit alpha, found in Rhodopseudomonas palustris (strain BisA53).